The sequence spans 737 residues: Glycogen [starch] synthase, muscle (737 aa).

Ser-8 is subject to Phosphoserine; by AMPK and PKA. Ser-11 is subject to Phosphoserine. Lys-39 contacts UDP. Residues His-205 and Arg-211 each contribute to the UDP-alpha-D-glucose site. Alpha-D-glucose 6-phosphate is bound by residues His-291, Glu-292, Gln-294, His-297, and Lys-301. A UDP-binding site is contributed by Arg-331. Arg-331 contacts UDP-alpha-D-glucose. Ser-412 is subject to Phosphoserine. Position 501 (His-501) interacts with alpha-D-glucose 6-phosphate. UDP-alpha-D-glucose contacts are provided by Glu-510, Trp-512, and Gly-513. A UDP-binding site is contributed by Thr-515. Alpha-D-glucose 6-phosphate-binding residues include Arg-582 and Arg-586. Residues 634–737 are disordered; that stretch reads YRYPRPASVP…PTSSLGEERN (104 aa). A Phosphoserine; by DYRK2, GSK3-alpha, GSK3-beta and PASK modification is found at Ser-641. Residues Ser-645 and Ser-649 each carry the phosphoserine; by GSK3-alpha and GSK3-beta modification. Ser-652 carries the phosphoserine modification. Ser-653 carries the phosphoserine; by GSK3-alpha and GSK3-beta modification. Phosphoserine; by CK2 is present on Ser-657. A compositionally biased stretch (acidic residues) spans 658–681; it reads EDEEDPRNGPLEEDGERYDEDEEA. A compositionally biased stretch (basic and acidic residues) spans 682 to 695; sequence AKDRRNIRAPEWPR. Residue Ser-698 is modified to Phosphoserine. Over residues 698–714 the composition is skewed to polar residues; sequence SCTSSTSGSKRNSVDTA. Position 700 is a phosphothreonine (Thr-700). Position 710 is a phosphoserine (Ser-710). Over residues 715-737 the composition is skewed to low complexity; it reads TSSSLSTPSEPLSPTSSLGEERN. Phosphothreonine is present on Thr-721. A phosphoserine mark is found at Ser-727 and Ser-731.

It belongs to the glycosyltransferase 3 family. In terms of assembly, part of the GYS1-GYG1 complex, a heterooctamer composed of a tetramer of GYS1 and 2 dimers of GYG1, where each GYS1 protomer binds to one GYG1 subunit (via GYG1 C-terminus); the GYS1 tetramer may dissociate from GYG1 dimers to continue glycogen polymerization on its own. Phosphorylation at Ser-8 by AMPK inactivates the enzyme activity. Primed phosphorylation at Ser-657 (site 5) by CSNK2A1 and CSNK2A2 is required for inhibitory phosphorylation at Ser-641 (site 3a), Ser-645 (site 3b), Ser-649 (site 3c) and Ser-653 (site 4) by GSK3A an GSK3B. Phosphorylated at Ser-641 by PASK, leading to inactivation; phosphorylation by PASK is inhibited by glycogen. Phosphorylated at Ser-641 by DYRK2, leading to inactivation. Dephosphorylation at Ser-641 and Ser-645 by PP1 activates the enzyme.

The enzyme catalyses [(1-&gt;4)-alpha-D-glucosyl](n) + UDP-alpha-D-glucose = [(1-&gt;4)-alpha-D-glucosyl](n+1) + UDP + H(+). Its pathway is glycan biosynthesis; glycogen biosynthesis. Allosteric activation by glucose-6-phosphate. Phosphorylation reduces the activity towards UDP-glucose. When in the non-phosphorylated state, glycogen synthase does not require glucose-6-phosphate as an allosteric activator; when phosphorylated it does. Its function is as follows. Glycogen synthase participates in the glycogen biosynthetic process along with glycogenin and glycogen branching enzyme. Extends the primer composed of a few glucose units formed by glycogenin by adding new glucose units to it. In this context, glycogen synthase transfers the glycosyl residue from UDP-Glc to the non-reducing end of alpha-1,4-glucan. The chain is Glycogen [starch] synthase, muscle (GYS1) from Pongo abelii (Sumatran orangutan).